A 155-amino-acid chain; its full sequence is Ribonuclease H (155 aa).

The RNase H type-1 domain maps to 1-142; sequence MLKQVEIFTD…CDELARAAAM (142 aa). Mg(2+)-binding residues include aspartate 10, glutamate 48, aspartate 70, and aspartate 134.

The protein belongs to the RNase H family. As to quaternary structure, monomer. Requires Mg(2+) as cofactor.

It is found in the cytoplasm. The enzyme catalyses Endonucleolytic cleavage to 5'-phosphomonoester.. Functionally, endonuclease that specifically degrades the RNA of RNA-DNA hybrids. This is Ribonuclease H from Escherichia coli O127:H6 (strain E2348/69 / EPEC).